The chain runs to 875 residues: uncharacterized protein (875 aa).

This is an uncharacterized protein from Mycobacterium bovis (strain ATCC BAA-935 / AF2122/97).